The chain runs to 1007 residues: Glutamate receptor ionotropic, delta-2 (1007 aa).

The N-terminal stretch at 1–23 is a signal peptide; it reads MEVFPFLLVLSVWWSRTWDSANA. The segment at 24–345 is interaction with CBLN1 homotrimer; sequence DSIIHIGAIF…NAFHKKLEDR (322 aa). The Extracellular portion of the chain corresponds to 24–566; the sequence is DSIIHIGAIF…DMFACLAPFD (543 aa). 3 disulfides stabilise this stretch: cysteine 83–cysteine 355, cysteine 99–cysteine 131, and cysteine 298–cysteine 310. N-linked (GlcNAc...) asparagine glycosylation is present at asparagine 293. N-linked (GlcNAc...) asparagine glycosylation is present at asparagine 426. Residues glutamate 531, valine 534, and aspartate 535 each contribute to the Ca(2+) site. Residues 567-587 traverse the membrane as a helical segment; the sequence is LSLWACIAGTVLLVGLLVYLL. Residues 588–635 lie on the Cytoplasmic side of the membrane; it reads NWLNPPRLQMGSMTSTTLYNSMWFVYGSFVQQGGEVPYTTLATRMMMG. Residues 636–656 traverse the membrane as a helical segment; sequence AWWLFALIVISSYTANLAAFL. Over 657–830 the chain is Extracellular; it reads TITRIESSIQ…QKGGALDIKS (174 aa). 2 N-linked (GlcNAc...) asparagine glycosylation sites follow: asparagine 713 and asparagine 716. Ca(2+)-binding residues include aspartate 753, aspartate 755, and serine 757. Residues 831 to 851 form a helical membrane-spanning segment; that stretch reads FAGVFCILAAGIVLSCFIAML. The Cytoplasmic segment spans residues 852 to 1007; it reads ETWWNKRKGS…GNDPDRGTSI (156 aa). A Phosphoserine modification is found at serine 883. A Phosphothreonine modification is found at threonine 886. Residue serine 890 is modified to Phosphoserine. The segment at 921–991 is interaction with AP4M1; the sequence is DFRNTHITTT…MSSIPYQPTP (71 aa). Positions 1005-1007 match the PDZ-binding motif; that stretch reads TSI. Phosphoserine is present on serine 1006.

This sequence belongs to the glutamate-gated ion channel (TC 1.A.10.1) family. GRID2 subfamily. As to quaternary structure, tetramer; dimer of dimers. Interacts with EML2, MAGI2 (via PDZ domains) and AP4M1. Interacts with BECN1, GOPC, GRID2IP, SHANK1 and SHANK2. Interacts with CBLN2, but not with CBLN4. Interacts with CBLN1 (via C1q domain); the interaction is CBLN1-NRX1 complex formation-dependent; CBLN1-binding is calcium-independent; CBLN1 hexamers anchor GRID2 N-terminal domain dimers to monomeric NRXN1 isoform beta; promotes synaptogenesis and mediates the D-Serine-dependent long term depression signals and AMPA receptor endocytosis.

It is found in the postsynaptic cell membrane. The enzyme catalyses Ca(2+)(in) = Ca(2+)(out). It carries out the reaction Na(+)(in) = Na(+)(out). Functionally, member of the ionotropic glutamate receptor family, which plays a crucial role in synaptic organization and signal transduction in the central nervous system. Although it shares structural features with ionotropic glutamate receptors, does not bind glutamate as a primary ligand. Promotes synaptogenesis and mediates the D-Serine-dependent long term depression signals and AMPA receptor endocytosis of cerebellar parallel fiber-Purkinje cell (PF-PC) synapses through the NRX1B-CBLN1-GRID2 triad complex. In the presence of neurexins and cerebellins, forms cation-selective channels that are proposed to be gated by glycine and D-serine. However, recent research disputes this ligand-gated cation channel activity. Cation-selective ion channel activity can be triggered by GRM1 in Purkinje cells. In Homo sapiens (Human), this protein is Glutamate receptor ionotropic, delta-2 (GRID2).